A 293-amino-acid polypeptide reads, in one-letter code: Ribosomal RNA small subunit methyltransferase A (293 aa).

Positions 38, 40, 65, 86, 116, and 133 each coordinate S-adenosyl-L-methionine.

Belongs to the class I-like SAM-binding methyltransferase superfamily. rRNA adenine N(6)-methyltransferase family. RsmA subfamily.

It is found in the cytoplasm. The catalysed reaction is adenosine(1518)/adenosine(1519) in 16S rRNA + 4 S-adenosyl-L-methionine = N(6)-dimethyladenosine(1518)/N(6)-dimethyladenosine(1519) in 16S rRNA + 4 S-adenosyl-L-homocysteine + 4 H(+). Specifically dimethylates two adjacent adenosines (A1518 and A1519) in the loop of a conserved hairpin near the 3'-end of 16S rRNA in the 30S particle. May play a critical role in biogenesis of 30S subunits. The sequence is that of Ribosomal RNA small subunit methyltransferase A from Paenarthrobacter aurescens (strain TC1).